The chain runs to 160 residues: E3 ubiquitin ligase complex SCF subunit sconC (160 aa).

An interaction with the F-box domain of F-box proteins region spans residues 101–160 (ILAANYLDIKALLDVGCKTVANMIKGKSPEEIRKTFNIQNDFTPEEEDQIRRENEWAEDR).

This sequence belongs to the SKP1 family. As to quaternary structure, component of the SCF (SKP1-CUL1-F-box protein) E3 ubiquitin ligase complexes.

Its pathway is protein modification; protein ubiquitination. Its function is as follows. Essential component of the SCF (SKP1-CUL1-F-box protein) E3 ubiquitin ligase complexes, which mediate the ubiquitination and subsequent proteasomal degradation of target proteins. Controls sulfur metabolite repression, probably by mediating the inactivation or degradation of the metR transcription factor. The protein is E3 ubiquitin ligase complex SCF subunit sconC (sconC) of Talaromyces marneffei (strain ATCC 18224 / CBS 334.59 / QM 7333) (Penicillium marneffei).